The following is a 417-amino-acid chain: D-amino acid dehydrogenase (417 aa).

3 to 17 is an FAD binding site; it reads IVVLGGGVVGVTSAW.

The protein belongs to the DadA oxidoreductase family. It depends on FAD as a cofactor.

It carries out the reaction a D-alpha-amino acid + A + H2O = a 2-oxocarboxylate + AH2 + NH4(+). It functions in the pathway amino-acid degradation; D-alanine degradation; NH(3) and pyruvate from D-alanine: step 1/1. In terms of biological role, oxidative deamination of D-amino acids. In Aeromonas salmonicida (strain A449), this protein is D-amino acid dehydrogenase.